The following is a 127-amino-acid chain: Small ribosomal subunit protein uS11 (127 aa).

The protein belongs to the universal ribosomal protein uS11 family. As to quaternary structure, part of the 30S ribosomal subunit. Interacts with proteins S7 and S18. Binds to IF-3.

Its function is as follows. Located on the platform of the 30S subunit, it bridges several disparate RNA helices of the 16S rRNA. Forms part of the Shine-Dalgarno cleft in the 70S ribosome. This chain is Small ribosomal subunit protein uS11, found in Anaeromyxobacter dehalogenans (strain 2CP-C).